Here is a 263-residue protein sequence, read N- to C-terminus: HTH-type transcriptional repressor NanR (263 aa).

A disordered region spans residues 1–21; the sequence is MGLMNAFDSQTEDSSPVIGRN. Positions 30 to 98 constitute an HTH gntR-type domain; sequence KKLSEMVEEE…NGERARVSRP (69 aa). The H-T-H motif DNA-binding region spans 58 to 77; the sequence is ERELMAFFNVGRPSVREALA.

Belongs to the NanR family.

In terms of biological role, transcriptional repressor that controls expression of the genes required for the catabolism of sialic acids. This is HTH-type transcriptional repressor NanR from Escherichia coli O7:K1 (strain IAI39 / ExPEC).